The chain runs to 346 residues: MERPGSNGSCSGCRLEGGPAARAASGLAAVLIVTIVVDVLGNALVILSVLRNKKLRNAGNIFVVSLSVADLVVAVYPYPLILSAIFHNGWTMGNIHCQISGFLMGLSVIGSIFNITAIAINRYCYICHSLRYDKLFNLKNTCCYICLTWTLTVVAIVPNFFVGSLQYDPRIYSCTFAQTVSTSYTITVVVVHFIVPLSIVTFCYLRIWILVIQVKHRVRQDCKQKIRAADIRNFLTMFVVFVLFAVCWGPLNFIGLAVSINPSKVQPHIPEWLFVLSYFMAYFNSCLNAVIYGLLNQNFRKEYKRILLMLRTPRLLFIDVSKGGTEGLKSKPSPAVTNNNQAEIHL.

Topologically, residues 1-26 (MERPGSNGSCSGCRLEGGPAARAASG) are extracellular. N-linked (GlcNAc...) asparagine glycosylation is present at asparagine 7. Residues 27–47 (LAAVLIVTIVVDVLGNALVIL) form a helical membrane-spanning segment. The Cytoplasmic portion of the chain corresponds to 48 to 60 (SVLRNKKLRNAGN). Residues 61–81 (IFVVSLSVADLVVAVYPYPLI) traverse the membrane as a helical segment. The Extracellular segment spans residues 82 to 99 (LSAIFHNGWTMGNIHCQI). Cysteines 97 and 174 form a disulfide. The chain crosses the membrane as a helical span at residues 100–120 (SGFLMGLSVIGSIFNITAIAI). Topologically, residues 121–139 (NRYCYICHSLRYDKLFNLK) are cytoplasmic. A helical transmembrane segment spans residues 140–160 (NTCCYICLTWTLTVVAIVPNF). Residues 161 to 184 (FVGSLQYDPRIYSCTFAQTVSTSY) are Extracellular-facing. Residues 185–205 (TITVVVVHFIVPLSIVTFCYL) form a helical membrane-spanning segment. Topologically, residues 206–237 (RIWILVIQVKHRVRQDCKQKIRAADIRNFLTM) are cytoplasmic. Residues 238-258 (FVVFVLFAVCWGPLNFIGLAV) form a helical membrane-spanning segment. The Extracellular portion of the chain corresponds to 259 to 271 (SINPSKVQPHIPE). A helical transmembrane segment spans residues 272–292 (WLFVLSYFMAYFNSCLNAVIY). The Cytoplasmic portion of the chain corresponds to 293–346 (GLLNQNFRKEYKRILLMLRTPRLLFIDVSKGGTEGLKSKPSPAVTNNNQAEIHL). The segment at 326–346 (EGLKSKPSPAVTNNNQAEIHL) is disordered. Positions 335–346 (AVTNNNQAEIHL) are enriched in polar residues.

This sequence belongs to the G-protein coupled receptor 1 family. In terms of tissue distribution, expressed in optic tectum, neostriatum, hypothalamus, thalamus and pineal gland, less in cerebellum and retina.

The protein localises to the cell membrane. Its function is as follows. High affinity receptor for melatonin. The activity of this receptor is mediated by pertussis toxin sensitive G proteins that inhibits adenylate cyclase activity. This Gallus gallus (Chicken) protein is Melatonin receptor type 1C.